The primary structure comprises 65 residues: Omega-lycotoxin-Am1f (65 aa).

Positions 1–18 (GDEEDEVEETLPVAEEGR) are excised as a propeptide. Disulfide bonds link Cys-22-Cys-37, Cys-29-Cys-42, Cys-36-Cys-62, and Cys-44-Cys-60.

It belongs to the neurotoxin omega-lctx family. As to expression, expressed by the venom gland.

It is found in the secreted. Its function is as follows. Modulates Cav2.1/CACNA1A voltage-gated calcium channels (P/Q-type currents) in rat cerebellar Purkinje cells and hippocampal CA1-CA3 neurons. At saturating concentrations (&gt;10 nM) decelerates activation kinetics and slightly increases peak amplitude without affecting deactivation kinetics. In vivo, does not cause death when intravenously injected into mice. In rat models, through its activity on Cav2.1/CACNA1A, has an ameliorative effect on memory defects provoked by hyperstimulation of N-methyl-D-aspartate receptors (NMDARs) in the hippocampus. In Alopecosa marikovskyi (Wolf spider), this protein is Omega-lycotoxin-Am1f.